A 334-amino-acid polypeptide reads, in one-letter code: Probable peptidoglycan endopeptidase LytE (334 aa).

The N-terminal stretch at 1–25 is a signal peptide; it reads MKKQIITATTAVVLGSTLFAGAASA. 3 consecutive LysM domains span residues 26 to 69, 86 to 129, and 149 to 192; these read QSIK…TLSI, STYK…VLKL, and STYK…VLKV. 3 disordered regions span residues 70 to 89, 131 to 153, and 195 to 215; these read NGKSTSSKSSSSSSSSSTYK, GSTSSSSSSSSKVSSSSTSTYKV, and TSTSSSKPASSSSSSSSKTSS. Composition is skewed to low complexity over residues 72 to 87 and 132 to 153; these read KSTSSKSSSSSSSSST and STSSSSSSSSKVSSSSTSTYKV. The 118-residue stretch at 217–334 folds into the NlpC/P60 domain; the sequence is SLNVSKLVSD…KPRYLGAKRF (118 aa). Residue cysteine 247 is the Nucleophile of the active site. Histidine 296 serves as the catalytic Proton acceptor. Histidine 308 is an active-site residue.

Belongs to the peptidase C40 family.

It localises to the secreted. The protein resides in the cell wall. Functionally, cell wall hydrolase that cleaves gamma-D-glutamate-meso-diaminopimelate bonds in peptidoglycan. Seems to play a role in cell separation during vegetative growth. The chain is Probable peptidoglycan endopeptidase LytE (lytE) from Bacillus subtilis (strain 168).